The sequence spans 305 residues: Orotidine 5'-phosphate decarboxylase (305 aa).

Lys108 serves as the catalytic Proton donor.

The protein belongs to the OMP decarboxylase family. Type 2 subfamily.

The catalysed reaction is orotidine 5'-phosphate + H(+) = UMP + CO2. The protein operates within pyrimidine metabolism; UMP biosynthesis via de novo pathway; UMP from orotate: step 2/2. The sequence is that of Orotidine 5'-phosphate decarboxylase from Caldicellulosiruptor bescii (strain ATCC BAA-1888 / DSM 6725 / KCTC 15123 / Z-1320) (Anaerocellum thermophilum).